Here is a 593-residue protein sequence, read N- to C-terminus: Insulin-like growth factor 2 mRNA-binding protein 3-B (593 aa).

2 consecutive RRM domains span residues 2 to 75 (NKLY…HSVP) and 81 to 156 (RKLQ…YIPD). The interval 159–208 (ATPQSPSQQLQQPQQQHPQGRRGFGQRGPARQGSPGAAARPKPQSEVPLR) is disordered. Residues 161–176 (PQSPSQQLQQPQQQHP) are compositionally biased toward low complexity. 2 consecutive KH domains span residues 204-269 (EVPL…CKII) and 285-352 (EIPL…EEEV). The span at 390 to 402 (SGMPPPSAGVSSP) shows a compositional bias: low complexity. The tract at residues 390 to 412 (SGMPPPSAGVSSPTTSASYPPFG) is disordered. 2 KH domains span residues 417-482 (SETV…QGRI) and 499-565 (KLEA…QRKI). The interval 571 to 593 (QVRRQQQQQQKTAQSGQPQPRRK) is disordered.

This sequence belongs to the RRM IMP/VICKZ family. In terms of assembly, homodimer and multimer. Associates with microtubules. Interaction with a translocation machinery protein TRAPA of the endoplasmic reticulum. Component of a mRNP complex, at least composed of DAZAP1, IGF2BP3, STAU and VgRBP60. The mRNP complex with DAZAP1, IGF2BP3, STAU and VgRBP60 is only found in the cytoplasm. Interacts with a hnRNP 1 related RNA transport protein VgRBP60 both in the nucleus (in an RNA-independent manner) and the cytoplasm (in an RNA-dependent manner). Found in a B3 activator complex. As to expression, expressed in oocytes, kidney and pancreas (at protein level). Expressed in oocytes, kidney and pancreas.

The protein resides in the nucleus. The protein localises to the cytoplasm. It localises to the endoplasmic reticulum. RNA-binding protein that acts as a regulator of mRNA transport and localization. Binds to the RNA sequence motif 5'-UUCAC-3'. Preferentially binds to N6-methyladenosine (m6A)-containing mRNAs and increases their stability. Mediates the specific association of Vg1 RNA to microtubules. May regulate mRNA translation. Binds specifically to the vegetal localization elements (VLE or VgLE) in the 3'-UTR of Vg1 and VegT mRNAs. Binds to the Vg1 and VegT mRNAs in both the nucleus and the cytoplasm. May regulate mRNA translation. Acts as a transcription regulator. Binds to the 5'-[TA]GGTTACT-3' motif within element 3 of the TFIIIA gene promoter. The polypeptide is Insulin-like growth factor 2 mRNA-binding protein 3-B (igf2bp3-b) (Xenopus laevis (African clawed frog)).